The sequence spans 160 residues: MPSFDVVSEVDTHELTNAIDQANRELATRFDFKGVDAKFERDGDVINQFAPTEFQLKQMNDILRARLAARGIDVLSLEFGDIETNLAQARQKITVKQGIEQKIAKKIAAALKDAKLKVESQINGDKLRVQGKKRDDLQDAIAVLKAGKFELPLQFNNFRD.

Positions 33, 132, 134, 135, and 160 each coordinate 3',3'-c-di-GMP.

The protein belongs to the YajQ family.

Functionally, cyclic di-GMP effector that significantly contributes to virulence. Binds bis-(3',5')-cyclic diguanylate (cyclic di-GMP or c-di-GMP), an important bacterial second messenger that controls a wide range of cellular processes. In Stenotrophomonas maltophilia (strain K279a), this protein is Cyclic di-GMP-binding protein Smlt4090.